The following is a 256-amino-acid chain: Thiazole synthase (256 aa).

Residue Lys-95 is the Schiff-base intermediate with DXP of the active site. 1-deoxy-D-xylulose 5-phosphate contacts are provided by residues Gly-156, 182–183 (AG), and 204–205 (NT).

This sequence belongs to the ThiG family. Homotetramer. Forms heterodimers with either ThiH or ThiS.

It is found in the cytoplasm. The enzyme catalyses [ThiS sulfur-carrier protein]-C-terminal-Gly-aminoethanethioate + 2-iminoacetate + 1-deoxy-D-xylulose 5-phosphate = [ThiS sulfur-carrier protein]-C-terminal Gly-Gly + 2-[(2R,5Z)-2-carboxy-4-methylthiazol-5(2H)-ylidene]ethyl phosphate + 2 H2O + H(+). It functions in the pathway cofactor biosynthesis; thiamine diphosphate biosynthesis. In terms of biological role, catalyzes the rearrangement of 1-deoxy-D-xylulose 5-phosphate (DXP) to produce the thiazole phosphate moiety of thiamine. Sulfur is provided by the thiocarboxylate moiety of the carrier protein ThiS. In vitro, sulfur can be provided by H(2)S. The protein is Thiazole synthase of Salmonella paratyphi B (strain ATCC BAA-1250 / SPB7).